Here is a 696-residue protein sequence, read N- to C-terminus: Glutamate-rich protein 6B (696 aa).

Residues 1 to 10 (MSAENNQLSG) show a composition bias toward polar residues. The tract at residues 1–105 (MSAENNQLSG…EYLEKAGYLE (105 aa)) is disordered. 2 stretches are compositionally biased toward acidic residues: residues 32 to 44 (EDTE…ESLQ) and 54 to 72 (ESLE…EEEE). Over residues 73–91 (YLGKEEYLKEEEYLGKEEH) the composition is skewed to basic and acidic residues.

Belongs to the ERICH6 family.

The polypeptide is Glutamate-rich protein 6B (ERICH6B) (Homo sapiens (Human)).